Consider the following 101-residue polypeptide: Small ribosomal subunit protein uS14 (101 aa).

It belongs to the universal ribosomal protein uS14 family. Part of the 30S ribosomal subunit. Contacts proteins S3 and S10.

Binds 16S rRNA, required for the assembly of 30S particles and may also be responsible for determining the conformation of the 16S rRNA at the A site. This chain is Small ribosomal subunit protein uS14, found in Kocuria rhizophila (strain ATCC 9341 / DSM 348 / NBRC 103217 / DC2201).